Here is a 375-residue protein sequence, read N- to C-terminus: uncharacterized protein (375 aa).

The Radical SAM core domain occupies 78-302; sequence KKIEITSTIH…IFPNIRITSP (225 aa). Residues C92, C98, and C101 each coordinate [4Fe-4S] cluster.

[4Fe-4S] cluster serves as cofactor.

This is an uncharacterized protein from Methanocaldococcus jannaschii (strain ATCC 43067 / DSM 2661 / JAL-1 / JCM 10045 / NBRC 100440) (Methanococcus jannaschii).